The chain runs to 547 residues: Kelch repeat and BTB domain-containing protein 2 (547 aa).

In terms of domain architecture, BTB spans 20–89; it reads CDVIITIGDG…LYNRHISSMN (70 aa). Kelch repeat units follow at residues 295–342, 343–389, and 391–454; these read DIII…VIDD, TIYA…VLDQ, and IYII…SHKD.

In terms of assembly, interacts (via BTB domain) with host CUL3.

It is found in the host cytoplasm. Probable substrate-specific adapter of CUL3-containing E3 ubiquitin-protein ligases which mediate the ubiquitination and subsequent proteasomal degradation of host target proteins. This chain is Kelch repeat and BTB domain-containing protein 2 (KBTB2), found in Bos taurus (Bovine).